The primary structure comprises 264 residues: Carbonic anhydrase (264 aa).

Residues Met1–Ala33 constitute a signal peptide (tat-type signal). One can recognise an Alpha-carbonic anhydrase domain in the interval Val36–Ile264. 3 residues coordinate Zn(2+): His127, His129, and His146. Thr214–Thr215 contacts substrate.

This sequence belongs to the alpha-carbonic anhydrase family. The cofactor is Zn(2+). In terms of processing, predicted to be exported by the Tat system. The position of the signal peptide cleavage has not been experimentally proven.

It carries out the reaction hydrogencarbonate + H(+) = CO2 + H2O. Reversible hydration of carbon dioxide. The sequence is that of Carbonic anhydrase (ecaA) from Nostoc sp. (strain PCC 7120 / SAG 25.82 / UTEX 2576).